The chain runs to 148 residues: UPF0179 protein Mevan_0979 (148 aa).

Belongs to the UPF0179 family.

This Methanococcus vannielii (strain ATCC 35089 / DSM 1224 / JCM 13029 / OCM 148 / SB) protein is UPF0179 protein Mevan_0979.